Consider the following 262-residue polypeptide: Hydroxyethylthiazole kinase (262 aa).

Methionine 50 is a binding site for substrate. The ATP site is built by arginine 125 and threonine 171. Glycine 198 serves as a coordination point for substrate.

Belongs to the Thz kinase family. Mg(2+) serves as cofactor.

The enzyme catalyses 5-(2-hydroxyethyl)-4-methylthiazole + ATP = 4-methyl-5-(2-phosphooxyethyl)-thiazole + ADP + H(+). It functions in the pathway cofactor biosynthesis; thiamine diphosphate biosynthesis; 4-methyl-5-(2-phosphoethyl)-thiazole from 5-(2-hydroxyethyl)-4-methylthiazole: step 1/1. Catalyzes the phosphorylation of the hydroxyl group of 4-methyl-5-beta-hydroxyethylthiazole (THZ). This Escherichia coli O17:K52:H18 (strain UMN026 / ExPEC) protein is Hydroxyethylthiazole kinase.